Here is a 243-residue protein sequence, read N- to C-terminus: Sugar fermentation stimulation protein homolog (243 aa).

Belongs to the SfsA family.

The polypeptide is Sugar fermentation stimulation protein homolog (Lacticaseibacillus casei (strain BL23) (Lactobacillus casei)).